A 211-amino-acid polypeptide reads, in one-letter code: Small ribosomal subunit protein uS5 (211 aa).

The 64-residue stretch at 51–114 folds into the S5 DRBM domain; it reads LKHEVLDVSL…ANAKLNITPV (64 aa).

It belongs to the universal ribosomal protein uS5 family. In terms of assembly, part of the 30S ribosomal subunit. Contacts protein S4.

With S4 and S12 plays an important role in translational accuracy. The protein is Small ribosomal subunit protein uS5 of Ignicoccus hospitalis (strain KIN4/I / DSM 18386 / JCM 14125).